A 166-amino-acid chain; its full sequence is MASVARSSALLKQVAAQQSVAANGLRVAAFHTTSRKSLLPPPPQRIEGTVNDPVEVPPPSPSHGSYHWTFDRVVAAGLIPLTVAPFAAGSLNPTMDAVLAATILIHSHTGFGNIIVDYVPSKRVPKARKVFTWGLNAATVLVGLALYEFETTDVGLTETIKRVWKA.

Over 1 to 65 (MASVARSSAL…VPPPSPSHGS (65 aa)) the chain is Mitochondrial matrix. Residues 66 to 87 (YHWTFDRVVAAGLIPLTVAPFA) traverse the membrane as a helical segment. The Mitochondrial intermembrane portion of the chain corresponds to 88–94 (AGSLNPT). The chain crosses the membrane as a helical span at residues 95-115 (MDAVLAATILIHSHTGFGNII). H106 contributes to the heme binding site. At 116–124 (VDYVPSKRV) the chain is on the mitochondrial matrix side. Residue Y118 participates in a ubiquinone binding. The chain crosses the membrane as a helical span at residues 125 to 149 (PKARKVFTWGLNAATVLVGLALYEF). The Mitochondrial intermembrane portion of the chain corresponds to 150–166 (ETTDVGLTETIKRVWKA).

This sequence belongs to the CybS family. In terms of assembly, forms part of complex II containing four subunits: a flavoprotein (FP), an iron-sulfur protein (IP) and a cytochrome b composed of a large and a small subunit.

It is found in the mitochondrion inner membrane. The protein operates within carbohydrate metabolism; tricarboxylic acid cycle. Its function is as follows. Membrane-anchoring subunit of succinate dehydrogenase (SDH) that is involved in complex II of the mitochondrial electron transport chain and is responsible for transferring electrons from succinate to ubiquinone (coenzyme Q). The polypeptide is Succinate dehydrogenase [ubiquinone] cytochrome b small subunit, mitochondrial (Neurospora crassa (strain ATCC 24698 / 74-OR23-1A / CBS 708.71 / DSM 1257 / FGSC 987)).